The sequence spans 380 residues: Cystathionine beta-lyase (380 aa).

N6-(pyridoxal phosphate)lysine is present on Lys-196.

Belongs to the trans-sulfuration enzymes family. Requires pyridoxal 5'-phosphate as cofactor.

It is found in the cytoplasm. The enzyme catalyses L,L-cystathionine + H2O = L-homocysteine + pyruvate + NH4(+). The catalysed reaction is an S-substituted L-cysteine + H2O = a thiol + pyruvate + NH4(+). It functions in the pathway amino-acid biosynthesis; L-methionine biosynthesis via de novo pathway; L-homocysteine from L-cystathionine: step 1/1. In terms of biological role, the enzymatic degradation of amino acids in cheese is believed to generate aroma compounds and therefore to be essential for flavor development. Cystathionine beta-lyase (CBL) can convert cystathionine to homocysteine but is also able to catalyze an alpha, gamma elimination. With methionine as a substrate, it produces volatile sulfur compounds which are important for flavor formation in Gouda cheese. This Lactococcus lactis subsp. lactis (strain IL1403) (Streptococcus lactis) protein is Cystathionine beta-lyase (metC).